A 317-amino-acid polypeptide reads, in one-letter code: Ribosomal RNA small subunit methyltransferase H (317 aa).

S-adenosyl-L-methionine contacts are provided by residues 37–39 (AGH), D56, F85, D106, and Q113.

Belongs to the methyltransferase superfamily. RsmH family.

It localises to the cytoplasm. It carries out the reaction cytidine(1402) in 16S rRNA + S-adenosyl-L-methionine = N(4)-methylcytidine(1402) in 16S rRNA + S-adenosyl-L-homocysteine + H(+). In terms of biological role, specifically methylates the N4 position of cytidine in position 1402 (C1402) of 16S rRNA. The polypeptide is Ribosomal RNA small subunit methyltransferase H (Lactococcus lactis subsp. lactis (strain IL1403) (Streptococcus lactis)).